A 158-amino-acid polypeptide reads, in one-letter code: C-type lection lectoxin-Enh3 (158 aa).

The N-terminal stretch at 1–23 is a signal peptide; the sequence is MGQFTVVSLGLLAMFLSLSGAKG. 3 disulfide bridges follow: Cys26-Cys37, Cys54-Cys154, and Cys129-Cys146. A C-type lectin domain is found at 33-155; the sequence is RNGVCNKLFP…CASLHPFICQ (123 aa). The Mannose-binding signature appears at 119–121; the sequence is EPN. Ca(2+)-binding residues include Glu127, Asn142, and Asp143.

Belongs to the true venom lectin family. As to expression, expressed by the venom gland.

It is found in the secreted. Functionally, mannose-binding lectin which recognizes specific carbohydrate structures and agglutinates a variety of animal cells by binding to cell-surface glycoproteins and glycolipids. May be a calcium-dependent lectin. This is C-type lection lectoxin-Enh3 from Pseudoferania polylepis (Macleay's water snake).